Reading from the N-terminus, the 376-residue chain is Erythronate-4-phosphate dehydrogenase (376 aa).

The substrate site is built by serine 45 and threonine 67. Position 147 (aspartate 147) interacts with NAD(+). Residue arginine 209 is part of the active site. Aspartate 233 contributes to the NAD(+) binding site. Glutamate 238 is a catalytic residue. The active-site Proton donor is histidine 255. Residue glycine 258 participates in NAD(+) binding. A substrate-binding site is contributed by tyrosine 259.

It belongs to the D-isomer specific 2-hydroxyacid dehydrogenase family. PdxB subfamily. As to quaternary structure, homodimer.

The protein resides in the cytoplasm. It catalyses the reaction 4-phospho-D-erythronate + NAD(+) = (R)-3-hydroxy-2-oxo-4-phosphooxybutanoate + NADH + H(+). Its pathway is cofactor biosynthesis; pyridoxine 5'-phosphate biosynthesis; pyridoxine 5'-phosphate from D-erythrose 4-phosphate: step 2/5. Its function is as follows. Catalyzes the oxidation of erythronate-4-phosphate to 3-hydroxy-2-oxo-4-phosphonooxybutanoate. The polypeptide is Erythronate-4-phosphate dehydrogenase (Shewanella baltica (strain OS185)).